The chain runs to 251 residues: MTEQRLLTPDEFEAALRAKGAFYHIHHPYHIAMHNGEATREQIQGWVANRFYYQTSIPIKDAAIMANCPHPEVRRQWVQRILDHDGYDGSEGGIEAWLRLGEAVGLSRESLLSEERVLPGVRFAVDAYVNFARRACWEEAACSSLTELFAPQIHQARLDSWPQHYTWIEAEGYDYFRSRLNQARRDVEHGLSLALEYCNTMERQQRMLEILQFKLDILWSMLDAMTMAYTLDRAPYHTVTREAVWHKRRLV.

This sequence belongs to the PqqC family.

The catalysed reaction is 6-(2-amino-2-carboxyethyl)-7,8-dioxo-1,2,3,4,7,8-hexahydroquinoline-2,4-dicarboxylate + 3 O2 = pyrroloquinoline quinone + 2 H2O2 + 2 H2O + H(+). It functions in the pathway cofactor biosynthesis; pyrroloquinoline quinone biosynthesis. Ring cyclization and eight-electron oxidation of 3a-(2-amino-2-carboxyethyl)-4,5-dioxo-4,5,6,7,8,9-hexahydroquinoline-7,9-dicarboxylic-acid to PQQ. The polypeptide is Pyrroloquinoline-quinone synthase (Cronobacter sakazakii (strain ATCC BAA-894) (Enterobacter sakazakii)).